We begin with the raw amino-acid sequence, 268 residues long: Putative hydro-lyase ABSDF2257 (268 aa).

Belongs to the D-glutamate cyclase family.

The polypeptide is Putative hydro-lyase ABSDF2257 (Acinetobacter baumannii (strain SDF)).